Here is a 404-residue protein sequence, read N- to C-terminus: Deoxyguanosinetriphosphate triphosphohydrolase-like protein 1 (404 aa).

Positions 75–219 (RLTHSIEVAQ…AAIADDIAYN (145 aa)) constitute an HD domain.

The protein belongs to the dGTPase family. Type 2 subfamily.

This is Deoxyguanosinetriphosphate triphosphohydrolase-like protein 1 from Mesorhizobium japonicum (strain LMG 29417 / CECT 9101 / MAFF 303099) (Mesorhizobium loti (strain MAFF 303099)).